The primary structure comprises 243 residues: tRNA (guanine-N(1)-)-methyltransferase (243 aa).

S-adenosyl-L-methionine is bound by residues Gly108 and 127 to 132 (LGDFVL).

The protein belongs to the RNA methyltransferase TrmD family. Homodimer.

Its subcellular location is the cytoplasm. The catalysed reaction is guanosine(37) in tRNA + S-adenosyl-L-methionine = N(1)-methylguanosine(37) in tRNA + S-adenosyl-L-homocysteine + H(+). In terms of biological role, specifically methylates guanosine-37 in various tRNAs. The polypeptide is tRNA (guanine-N(1)-)-methyltransferase (Streptococcus equi subsp. zooepidemicus (strain MGCS10565)).